We begin with the raw amino-acid sequence, 220 residues long: Protein-L-isoaspartate O-methyltransferase (220 aa).

S65 is a catalytic residue.

It belongs to the methyltransferase superfamily. L-isoaspartyl/D-aspartyl protein methyltransferase family.

The protein localises to the cytoplasm. It catalyses the reaction [protein]-L-isoaspartate + S-adenosyl-L-methionine = [protein]-L-isoaspartate alpha-methyl ester + S-adenosyl-L-homocysteine. Its function is as follows. Catalyzes the methyl esterification of L-isoaspartyl residues in peptides and proteins that result from spontaneous decomposition of normal L-aspartyl and L-asparaginyl residues. It plays a role in the repair and/or degradation of damaged proteins. In Pelodictyon phaeoclathratiforme (strain DSM 5477 / BU-1), this protein is Protein-L-isoaspartate O-methyltransferase.